Reading from the N-terminus, the 248-residue chain is 2-C-methyl-D-erythritol 4-phosphate cytidylyltransferase (248 aa).

Belongs to the IspD/TarI cytidylyltransferase family. IspD subfamily.

The enzyme catalyses 2-C-methyl-D-erythritol 4-phosphate + CTP + H(+) = 4-CDP-2-C-methyl-D-erythritol + diphosphate. Its pathway is isoprenoid biosynthesis; isopentenyl diphosphate biosynthesis via DXP pathway; isopentenyl diphosphate from 1-deoxy-D-xylulose 5-phosphate: step 2/6. Catalyzes the formation of 4-diphosphocytidyl-2-C-methyl-D-erythritol from CTP and 2-C-methyl-D-erythritol 4-phosphate (MEP). This chain is 2-C-methyl-D-erythritol 4-phosphate cytidylyltransferase, found in Corynebacterium efficiens (strain DSM 44549 / YS-314 / AJ 12310 / JCM 11189 / NBRC 100395).